A 616-amino-acid polypeptide reads, in one-letter code: UvrABC system protein C (616 aa).

The region spanning 11–85 is the GIY-YIG domain; the sequence is ASPGVYIFRR…IKQHRPHYNV (75 aa). Residues 194-229 enclose the UVR domain; that stretch reads APVIARLKADMQAAARAQDFEQAARLRDRVQAVEKL.

Belongs to the UvrC family. As to quaternary structure, interacts with UvrB in an incision complex.

It is found in the cytoplasm. The UvrABC repair system catalyzes the recognition and processing of DNA lesions. UvrC both incises the 5' and 3' sides of the lesion. The N-terminal half is responsible for the 3' incision and the C-terminal half is responsible for the 5' incision. The sequence is that of UvrABC system protein C from Deinococcus geothermalis (strain DSM 11300 / CIP 105573 / AG-3a).